The chain runs to 705 residues: Polyribonucleotide nucleotidyltransferase (705 aa).

Mg(2+) is bound by residues aspartate 485 and aspartate 491. Positions 552–611 constitute a KH domain; it reads PKVFTMSINPSKIKDVIGAGGKTINKIIDETGVKIDIKEDGSVFVTAEDYESGKKALAMI. The S1 motif domain occupies 621-689; sequence GEVYLGKVTK…SMGRVNLSRK (69 aa).

Belongs to the polyribonucleotide nucleotidyltransferase family. It depends on Mg(2+) as a cofactor.

The protein resides in the cytoplasm. It carries out the reaction RNA(n+1) + phosphate = RNA(n) + a ribonucleoside 5'-diphosphate. Its function is as follows. Involved in mRNA degradation. Catalyzes the phosphorolysis of single-stranded polyribonucleotides processively in the 3'- to 5'-direction. The sequence is that of Polyribonucleotide nucleotidyltransferase from Clostridium novyi (strain NT).